The chain runs to 347 residues: Quinolinate synthase (347 aa).

Positions 47 and 68 each coordinate iminosuccinate. Residue cysteine 113 participates in [4Fe-4S] cluster binding. Iminosuccinate-binding positions include 139-141 (YAN) and serine 156. [4Fe-4S] cluster is bound at residue cysteine 200. Iminosuccinate contacts are provided by residues 226 to 228 (HPE) and threonine 243. Residue cysteine 297 coordinates [4Fe-4S] cluster.

Belongs to the quinolinate synthase family. Type 1 subfamily. It depends on [4Fe-4S] cluster as a cofactor.

It localises to the cytoplasm. The catalysed reaction is iminosuccinate + dihydroxyacetone phosphate = quinolinate + phosphate + 2 H2O + H(+). It participates in cofactor biosynthesis; NAD(+) biosynthesis; quinolinate from iminoaspartate: step 1/1. In terms of biological role, catalyzes the condensation of iminoaspartate with dihydroxyacetone phosphate to form quinolinate. The chain is Quinolinate synthase from Shigella flexneri serotype 5b (strain 8401).